The following is a 331-amino-acid chain: MSNEQEDFGSLFNNQGELGIMDDFAEFGFQTTTTPTNWAAAGNYMYPDQVHLPASINNPNMPINDWLEDAPMPDCYNVPSTSTDENNDPFPFSNISSQSSLKPKTPEKAVVEVRPTGNEMLDPEPKYPKEEKPWCTIFYYELTVRLGKAFEAKVPTITIDGATGASDECRMSLTSQPSSRNSKSSQIRNTVGAGIQLAYENGELWLTVLTDQIVFVQCPFLNQTLNKPLKYVFRLQNKGDQKRMKIFDKEQFEQEKTLALGPLTEKEVADERMRIFSNIRVSFCKGFGETYSRLKVVNLPCWIEIILHEPADEYDTVFRINNERPEIGSRS.

The MH2 domain maps to 134-331 (WCTIFYYELT…NERPEIGSRS (198 aa)). Residues 168–187 (ECRMSLTSQPSSRNSKSSQI) are disordered. Residues 175–185 (SQPSSRNSKSS) show a composition bias toward low complexity.

As to quaternary structure, interacts with R-SMAD daf-8 and co-SMAD daf-3. Interacts with daf-3 in a daf-8 dependent manner.

Probably an atypical receptor-regulated SMAD (R-SMAD) that is an intracellular signal transducer and transcriptional modulator activated by TGF-beta-like daf-7 signaling. Plays a role in TGF-beta-like daf-7 signaling in regulating entry into a developmentally arrested larval state known as dauer, in response to harsh environmental conditions; partially redundant with R-SMAD daf-8. This chain is Smad-related protein daf-14, found in Caenorhabditis elegans.